The sequence spans 284 residues: Bifunctional protein FolD 1 (284 aa).

NADP(+) contacts are provided by residues 166 to 168 and I232; that span reads GAS.

The protein belongs to the tetrahydrofolate dehydrogenase/cyclohydrolase family. Homodimer.

The enzyme catalyses (6R)-5,10-methylene-5,6,7,8-tetrahydrofolate + NADP(+) = (6R)-5,10-methenyltetrahydrofolate + NADPH. It catalyses the reaction (6R)-5,10-methenyltetrahydrofolate + H2O = (6R)-10-formyltetrahydrofolate + H(+). It participates in one-carbon metabolism; tetrahydrofolate interconversion. Functionally, catalyzes the oxidation of 5,10-methylenetetrahydrofolate to 5,10-methenyltetrahydrofolate and then the hydrolysis of 5,10-methenyltetrahydrofolate to 10-formyltetrahydrofolate. The sequence is that of Bifunctional protein FolD 1 from Ectopseudomonas mendocina (strain ymp) (Pseudomonas mendocina).